Here is a 674-residue protein sequence, read N- to C-terminus: Secretin GspD (674 aa).

The signal sequence occupies residues 1-24; sequence MKYWLKKSSWLLAGSLLSTPLAMA. The N0 stretch occupies residues 25-121; that stretch reads NEFSASFKGT…VLSGEERANG (97 aa). The N1 stretch occupies residues 123–187; sequence EVITQVVAVK…EIIRRVDQAG (65 aa). The interval 188 to 261 is N2; the sequence is DKEIEVVELN…LIKQLDVEMA (74 aa). Positions 264–338 are N3; the sequence is GNNRVVYLKY…AMLEVIGQLD (75 aa). Residues 343-612 are secretin; it reads QVLIEALIVE…VFIKPTIIRD (270 aa). The interval 395 to 417 is cap gate; the sequence is DTTQTKAVYDTNNNFLRNETTTT. Residues 614 to 674 form a s domain region; it reads VTADGITQRK…AFIEQMEAKQ (61 aa).

The protein belongs to the bacterial secretin family. GSP D subfamily. As to quaternary structure, forms a cylindrical channel with 15 subunits; unlike E.coli no 16-subunit channels are seen. The closed pentadeacameric channels are 195 Angstroms long and 145 Angstroms in diameter. Each subunit turns in a clock-wise manner around the channel.

The protein localises to the cell outer membrane. Functionally, involved in a type II secretion system (T2SS, formerly general secretion pathway, GSP) for the export of proteins. Required for secretion of cholera toxin through the outer membrane. This subunit forms the outer membrane channel. The sequence is that of Secretin GspD (epsD) from Vibrio cholerae serotype O1 (strain ATCC 39315 / El Tor Inaba N16961).